A 249-amino-acid polypeptide reads, in one-letter code: tRNA pseudouridine synthase A (249 aa).

Asp53 acts as the Nucleophile in catalysis. Tyr111 is a binding site for substrate.

It belongs to the tRNA pseudouridine synthase TruA family. As to quaternary structure, homodimer.

The enzyme catalyses uridine(38/39/40) in tRNA = pseudouridine(38/39/40) in tRNA. In terms of biological role, formation of pseudouridine at positions 38, 39 and 40 in the anticodon stem and loop of transfer RNAs. This chain is tRNA pseudouridine synthase A, found in Streptococcus equi subsp. zooepidemicus (strain MGCS10565).